The sequence spans 286 residues: uncharacterized protein (286 aa).

The HTH lysR-type domain occupies 1-58 (MLLEGIETLLVLSKEKTMSRTGSQLYISQSAVSKRIANLEKKLGKKLIVPAGRHIKLT). Residues 18-37 (MSRTGSQLYISQSAVSKRIA) constitute a DNA-binding region (H-T-H motif).

This sequence belongs to the LysR transcriptional regulatory family.

This is an uncharacterized protein from Vibrio cholerae serotype O1 (strain ATCC 39315 / El Tor Inaba N16961).